Reading from the N-terminus, the 238-residue chain is Large ribosomal subunit protein uL2 (238 aa).

Residues 198 to 238 (NHPHGGGSHQSPSFPTTVSRNAPPGRKVGHIAARSTGRRKR) form a disordered region. Positions 206–217 (HQSPSFPTTVSR) are enriched in polar residues.

Belongs to the universal ribosomal protein uL2 family. As to quaternary structure, part of the 50S ribosomal subunit. Forms a bridge to the 30S subunit in the 70S ribosome.

Functionally, one of the primary rRNA binding proteins. Required for association of the 30S and 50S subunits to form the 70S ribosome, for tRNA binding and peptide bond formation. It has been suggested to have peptidyltransferase activity; this is somewhat controversial. Makes several contacts with the 16S rRNA in the 70S ribosome. This Hyperthermus butylicus (strain DSM 5456 / JCM 9403 / PLM1-5) protein is Large ribosomal subunit protein uL2.